The following is a 481-amino-acid chain: Cysteine--tRNA ligase (481 aa).

Cys-29 lines the Zn(2+) pocket. Positions 31-41 match the 'HIGH' region motif; it reads PTVYDYSHLGH. Positions 210, 235, and 239 each coordinate Zn(2+). Positions 272-276 match the 'KMSKS' region motif; sequence KMSKS. Lys-275 is a binding site for ATP.

It belongs to the class-I aminoacyl-tRNA synthetase family. As to quaternary structure, monomer. It depends on Zn(2+) as a cofactor.

The protein resides in the cytoplasm. It carries out the reaction tRNA(Cys) + L-cysteine + ATP = L-cysteinyl-tRNA(Cys) + AMP + diphosphate. In Anaeromyxobacter dehalogenans (strain 2CP-C), this protein is Cysteine--tRNA ligase.